A 320-amino-acid polypeptide reads, in one-letter code: GTP 3',8-cyclase (320 aa).

The region spanning 4–227 (LYSRRINYMR…METEKSSPAK (224 aa)) is the Radical SAM core domain. Residue Arg13 coordinates GTP. Positions 20 and 24 each coordinate [4Fe-4S] cluster. Tyr26 lines the S-adenosyl-L-methionine pocket. Position 27 (Cys27) interacts with [4Fe-4S] cluster. Arg63 is a GTP binding site. Gly67 is an S-adenosyl-L-methionine binding site. Residue Thr94 coordinates GTP. S-adenosyl-L-methionine is bound at residue Ser118. Lys155 serves as a coordination point for GTP. Met189 serves as a coordination point for S-adenosyl-L-methionine. Residues Cys249 and Cys252 each coordinate [4Fe-4S] cluster. 254 to 256 (RVR) lines the GTP pocket. Cys266 provides a ligand contact to [4Fe-4S] cluster. Residues 300-312 (KHDLLTDSHEESN) are compositionally biased toward basic and acidic residues. The segment at 300 to 320 (KHDLLTDSHEESNRGMSQIGG) is disordered.

This sequence belongs to the radical SAM superfamily. MoaA family. Monomer and homodimer. [4Fe-4S] cluster serves as cofactor.

It catalyses the reaction GTP + AH2 + S-adenosyl-L-methionine = (8S)-3',8-cyclo-7,8-dihydroguanosine 5'-triphosphate + 5'-deoxyadenosine + L-methionine + A + H(+). Its pathway is cofactor biosynthesis; molybdopterin biosynthesis. In terms of biological role, catalyzes the cyclization of GTP to (8S)-3',8-cyclo-7,8-dihydroguanosine 5'-triphosphate. The polypeptide is GTP 3',8-cyclase (Alkaliphilus oremlandii (strain OhILAs) (Clostridium oremlandii (strain OhILAs))).